Here is a 184-residue protein sequence, read N- to C-terminus: MTEELADNYRHIIAGLGEDPDREGLRDTPKRAAKAMQFLTQGYGQTLESLVNGAVFESQTDEMVLIKDIELYSMCEHHLLPFIGKCHIAYLPEGRVLGLSKFARIVDMYARRMQIQENLTRQIAEAVQQVTQARGVGVIIEAQHMCMMMRGVEKQNSSMKTSVMLGAFRNNLTTRQEFLTLVHG.

Residues C75, H78, and C146 each coordinate Zn(2+).

The protein belongs to the GTP cyclohydrolase I family. Toroid-shaped homodecamer, composed of two pentamers of five dimers.

The enzyme catalyses GTP + H2O = 7,8-dihydroneopterin 3'-triphosphate + formate + H(+). It functions in the pathway cofactor biosynthesis; 7,8-dihydroneopterin triphosphate biosynthesis; 7,8-dihydroneopterin triphosphate from GTP: step 1/1. The protein is GTP cyclohydrolase 1 of Chromohalobacter salexigens (strain ATCC BAA-138 / DSM 3043 / CIP 106854 / NCIMB 13768 / 1H11).